Here is a 502-residue protein sequence, read N- to C-terminus: Putative diacyglycerol O-acyltransferase MT1809 (502 aa).

Residue His174 is the Proton acceptor of the active site.

Belongs to the long-chain O-acyltransferase family.

It catalyses the reaction an acyl-CoA + a 1,2-diacyl-sn-glycerol = a triacyl-sn-glycerol + CoA. It functions in the pathway glycerolipid metabolism; triacylglycerol biosynthesis. The polypeptide is Putative diacyglycerol O-acyltransferase MT1809 (Mycobacterium tuberculosis (strain CDC 1551 / Oshkosh)).